We begin with the raw amino-acid sequence, 35 residues long: Beta/delta-theraphotoxin-Pre1a (35 aa).

Intrachain disulfides connect Cys-3–Cys-18, Cys-10–Cys-23, and Cys-17–Cys-30.

Belongs to the neurotoxin 10 (Hwtx-1) family. As to expression, expressed by the venom gland.

The protein resides in the secreted. In terms of biological role, gating-modifier toxin that both inhibits the peak current of human Nav1.1/SCN1A, rat Nav1.2/SCN2A, human Nav1.6/SCN8A, and human Nav1.7/SCN9A and concurrently inhibits fast inactivation of human Nav1.1 and rat Nav1.3/SCN3A. The relative rank order potency for Nav modulation is Nav1.3 (inactivation EC(50)=45 nM) &gt; Nav1.7 &gt; Nav1.2 &gt; Nav1.1 (inactivation) &gt; Nav1.1 &gt; Nav1.6 &gt; Nav1.3 (IC(50)=8 uM). The DII and DIV S3-S4 loops of Nav channel voltage sensors are important for the interaction of this toxin with Nav channels but cannot account for its unique subtype selectivity. It is the variability of the S1-S2 loops between NaV channels which contributes substantially to the selectivity profile observed for this toxin, particularly with regards to fast inactivation. This toxin may bind the channel in the resting state. The polypeptide is Beta/delta-theraphotoxin-Pre1a (Psalmopoeus reduncus (Costa Rican orangemouth tarantula)).